A 261-amino-acid chain; its full sequence is Protein LIKE COV 2 (261 aa).

Residues 1 to 38 (MAEGKEATTSSLSQGLTPHQDPDDAPKSPPNSPNSSTR) are disordered. Over 1–56 (MAEGKEATTSSLSQGLTPHQDPDDAPKSPPNSPNSSTRKACYGVLQSWVSKKFMTG) the chain is Cytoplasmic. Residues 7–17 (ATTSSLSQGLT) are compositionally biased toward polar residues. A helical transmembrane segment spans residues 57 to 77 (FVVLFPVAVTFLITWWFIQFV). Topologically, residues 78 to 91 (DGFFSPIYENLGVD) are extracellular. A helical transmembrane segment spans residues 92 to 112 (IFGLGFITSVLFTFFVGIFAS). The Cytoplasmic portion of the chain corresponds to 113–261 (SWLGSTVFWL…HSLRVPLNRL (149 aa)).

The protein belongs to the plant COV1 protein family.

Its subcellular location is the membrane. The polypeptide is Protein LIKE COV 2 (Arabidopsis thaliana (Mouse-ear cress)).